We begin with the raw amino-acid sequence, 242 residues long: NAD(P)H-quinone oxidoreductase subunit K (242 aa).

4 residues coordinate [4Fe-4S] cluster: Cys59, Cys60, Cys124, and Cys155.

The protein belongs to the complex I 20 kDa subunit family. As to quaternary structure, NDH-1 can be composed of about 15 different subunits; different subcomplexes with different compositions have been identified which probably have different functions. Requires [4Fe-4S] cluster as cofactor.

It localises to the cellular thylakoid membrane. It carries out the reaction a plastoquinone + NADH + (n+1) H(+)(in) = a plastoquinol + NAD(+) + n H(+)(out). The enzyme catalyses a plastoquinone + NADPH + (n+1) H(+)(in) = a plastoquinol + NADP(+) + n H(+)(out). Functionally, NDH-1 shuttles electrons from an unknown electron donor, via FMN and iron-sulfur (Fe-S) centers, to quinones in the respiratory and/or the photosynthetic chain. The immediate electron acceptor for the enzyme in this species is believed to be plastoquinone. Couples the redox reaction to proton translocation, and thus conserves the redox energy in a proton gradient. Cyanobacterial NDH-1 also plays a role in inorganic carbon-concentration. The sequence is that of NAD(P)H-quinone oxidoreductase subunit K from Synechococcus sp. (strain RCC307).